Consider the following 202-residue polypeptide: Eukaryotic translation initiation factor isoform 4E (202 aa).

The interval 1-24 (MATEAPPPVDTTEVPPFTAAETAV) is disordered. Residues 46-51 (QGAAWG), lysine 78, and 96-97 (WE) each bind mRNA. An intrachain disulfide couples cysteine 101 to cysteine 140. MRNA is bound by residues 147 to 152 (RRSQDK) and 191 to 194 (KRER).

This sequence belongs to the eukaryotic initiation factor 4E family. As to quaternary structure, EIF4F is a multi-subunit complex, the composition of which varies with external and internal environmental conditions. It is composed of at least EIF4A, EIF4E and EIF4G. EIF4E is also known to interact with other partners. In higher plants two isoforms of EIF4F have been identified, named isoform EIF4F and isoform EIF(iso)4F. Isoform EIF4F has subunits p220 and p26, whereas isoform EIF(iso)4F has subunits p82 and p28. In terms of assembly, (Microbial infection) Interacts with viral genome-linked protein (VPg); this interaction is possible in susceptible hosts but impaired in resistant plants. According to the redox status, the Cys-101-Cys-140 disulfide bridge may have a role in regulating protein function by affecting its ability to bind capped mRNA.

It localises to the cytoplasm. Its subcellular location is the nucleus. Functionally, component of the protein complex eIF4F, which is involved in the recognition of the mRNA cap, ATP-dependent unwinding of 5'-terminal secondary structure and recruitment of mRNA to the ribosome. Recognizes and binds the 7-methylguanosine-containing mRNA cap during an early step in the initiation of protein synthesis and facilitates ribosome binding by inducing the unwinding of the mRNAs secondary structures. Key component of recessive resistance to potyviruses. Its function is as follows. (Microbial infection) Susceptibility host factor required for viral infection by recruiting viral RNAs to the host ribosomal complex via an interaction with viral genome-linked protein (VPg). The protein is Eukaryotic translation initiation factor isoform 4E of Capsicum annuum (Capsicum pepper).